The chain runs to 609 residues: Probable G-protein coupled receptor 153 (609 aa).

At 1-11 the chain is on the extracellular side; it reads MSDERRLPGSA. The helical transmembrane segment at 12 to 32 threads the bilayer; that stretch reads VGWLVCGGLSLLANAWGILSV. At 33 to 41 the chain is on the cytoplasmic side; sequence GAKQKKWKP. A helical transmembrane segment spans residues 42-62; sequence LEFLLCTLAATHMLNVAVPIA. Topologically, residues 63–84 are extracellular; it reads TYSVVQLRRQRPDFEWNEGLCK. A helical membrane pass occupies residues 85-105; the sequence is VFVSTFYTLTLATCFSVTSLS. Topologically, residues 106-126 are cytoplasmic; the sequence is YHRMWMVCWPVNYRLSNAKKQ. The chain crosses the membrane as a helical span at residues 127–147; that stretch reads AVHTVMGIWMVSFILSALPAV. Residues 148–175 are Extracellular-facing; it reads GWHDTSERFYTHGCRFIVAEIGLGFGVC. A helical membrane pass occupies residues 176-196; it reads FLLLVGGSVAMGVICTAIALF. Residues 197 to 243 are Cytoplasmic-facing; that stretch reads QTLAVQVGRQADRRAFTVPTIVVEDAQGKRRSSIDGSEPAKTSLQTT. A helical transmembrane segment spans residues 244–264; that stretch reads GLVTTIVFIYDCLMGFPVLVV. The Extracellular portion of the chain corresponds to 265–276; sequence SFSSLRADASAP. The helical transmembrane segment at 277–297 threads the bilayer; that stretch reads WMALCVLWCSVAQALLLPVFL. Residues 298-609 lie on the Cytoplasmic side of the membrane; it reads WACDRYRADL…LHSDSLGSAS (312 aa). Disordered stretches follow at residues 446 to 496 and 514 to 609; these read DAPP…SASA and ALRR…GSAS. Composition is skewed to low complexity over residues 458–479 and 527–536; these read ESLL…RDSP and AAPDGADPGE. Over residues 571–583 the composition is skewed to gly residues; sequence EPGGLRAAGGGGS. Positions 584 to 596 are enriched in low complexity; it reads TSSFLSSPSESSG.

The protein belongs to the G-protein coupled receptor 1 family.

It localises to the cell membrane. Orphan receptor. In Homo sapiens (Human), this protein is Probable G-protein coupled receptor 153 (GPR153).